A 127-amino-acid polypeptide reads, in one-letter code: uncharacterized protein (127 aa).

Positions 1–26 are cleaved as a signal peptide; it reads MKAIYALLAVVALALVAVSLFSQSDS.

This is an uncharacterized protein from Archaeoglobus fulgidus (strain ATCC 49558 / DSM 4304 / JCM 9628 / NBRC 100126 / VC-16).